The following is a 724-amino-acid chain: Protein Aster-A (724 aa).

The segment covering 1–18 has biased composition (low complexity); sequence MFDTTPHSGRSTPSSSPS. The segment at 1-66 is disordered; that stretch reads MFDTTPHSGR…TPSTQSLGSR (66 aa). Polar residues predominate over residues 57-66; it reads TPSTQSLGSR. A GRAM domain is found at 91-158; it reads EDFRKLFSKL…KEVTCLKKEK (68 aa). Residues 256–336 form a disordered region; it reads SSGAADRSQE…GPTTLGPLDL (81 aa). Phosphoserine occurs at positions 263, 267, and 271. The span at 300 to 312 shows a compositional bias: polar residues; sequence DSQPDASSSQTVT. Positions 326–336 are enriched in low complexity; sequence DGPTTLGPLDL. One can recognise a VASt domain in the interval 367–538; sequence SGRLLINSVF…ELAKAEKLSL (172 aa). Position 415 is a phosphoserine (Ser-415). Residues 560–579 are disordered; it reads SWRAHGDGPQHPDPDPCARA. The segment covering 563–575 has biased composition (basic and acidic residues); sequence AHGDGPQHPDPDP. The chain crosses the membrane as a helical span at residues 610 to 630; that stretch reads LISIVICVSLIILIALNVLLF.

Expressed in liver.

It localises to the endoplasmic reticulum membrane. It is found in the cell membrane. The protein resides in the cytoplasmic vesicle. Its subcellular location is the autophagosome. Cholesterol transporter that mediates non-vesicular transport of cholesterol from the plasma membrane (PM) to the endoplasmic reticulum (ER). Contains unique domains for binding cholesterol and the PM, thereby serving as a molecular bridge for the transfer of cholesterol from the PM to the ER. Plays a crucial role in cholesterol homeostasis and has the unique ability to localize to the PM based on the level of membrane cholesterol. In lipid-poor conditions localizes to the ER membrane and in response to excess cholesterol in the PM is recruited to the endoplasmic reticulum-plasma membrane contact sites (EPCS) which is mediated by the GRAM domain. At the EPCS, the sterol-binding VASt/ASTER domain binds to the cholesterol in the PM and facilitates its transfer from the PM to ER. May play a role in tumor progression. Plays a role in autophagy regulation and is required for biogenesis of the autophagosome. This function in autophagy requires its cholesterol-transfer activity. The sequence is that of Protein Aster-A from Homo sapiens (Human).